A 536-amino-acid chain; its full sequence is Probable galacturonosyltransferase 10 (536 aa).

The Cytoplasmic segment spans residues 1 to 16; the sequence is MRRRGGDSFRRAGRRK. Residues 17 to 37 traverse the membrane as a helical; Signal-anchor for type II membrane protein segment; it reads ISNVVWWVLSGIALLLFFLIL. Topologically, residues 38–536 are lumenal; that stretch reads SKAGHIEPRP…SPFMQQCNFH (499 aa). N-linked (GlcNAc...) asparagine glycans are attached at residues Asn-64, Asn-246, Asn-300, Asn-403, and Asn-436.

The protein belongs to the glycosyltransferase 8 family. As to expression, expressed in roots, inflorescences, siliques, leaves and stems.

The protein localises to the golgi apparatus membrane. It participates in glycan metabolism; pectin biosynthesis. May be involved in pectin and/or xylans biosynthesis in cell walls. In Arabidopsis thaliana (Mouse-ear cress), this protein is Probable galacturonosyltransferase 10 (GAUT10).